Here is an 83-residue protein sequence, read N- to C-terminus: Gas vesicle protein G1 (83 aa).

Belongs to the gas vesicle GvpG family. In terms of assembly, gvpF to GvpM interact with each other in vitro, and may form multi-subunit complex(es). Might interact with GvpA1.

It is found in the gas vesicle. Its function is as follows. Proteins GvpF to GvpM might be involved in nucleating gas vesicle formation. A minor component of the gas vesicle. Gas vesicles are hollow, gas filled proteinaceous nanostructures found in several microbial planktonic microorganisms. They allow positioning of halobacteria at the optimal depth for growth in the poorly aerated, shallow brine pools of their habitat. Functionally, expression of a 9.5 kb p-vac DNA fragment containing 2 divergently transcribed regions (gvpD-gvpE-gvpF-gvpG-gvpH-gvpI-gvpJ-gvpK-gvpL-gvpM and gvpA-gvpC-gvpN-gvpO) allows H.volcanii to produce gas vesicles. A minimal gas vesicle can be made in H.volcanii by gvpA1-gvpO1 plus gvpF1-gvpG1-gvpJ1-gvpK1-gvpL1-gvpM1; lack of enough GvpJ1 prevents formation. A similar region restores gas vesicle production in H.halobium without the p-vac locus, but it still has the c-vac locus. The protein is Gas vesicle protein G1 (gvpG11) of Halobacterium salinarum (strain ATCC 700922 / JCM 11081 / NRC-1) (Halobacterium halobium).